A 478-amino-acid chain; its full sequence is Metalloendopeptidase OMA1, mitochondrial (478 aa).

The interval 134–164 (LGRSIRKWWVALPANKKQLFREWSWRRRWHF) is stress-sensor region. The helical transmembrane segment at 163–183 (HFLGAGTGLLFIASLFFFTHL) threads the bilayer. Position 296 (H296) interacts with Zn(2+). The active site involves E297. The Zn(2+) site is built by H300 and E361. A disulfide bridge links C376 with C434.

This sequence belongs to the peptidase M48 family. As to quaternary structure, homooligomer. The cofactor is Zn(2+). Post-translationally, autocatalytically cleaved in response to mitochondrial depolarization both at the N-terminus and C-terminus to generate the short active form (S-OMA1). The S-OMA1 form is unstable. In terms of processing, may form a redox-dependent disulfide bond. Exists in a semi-oxidized state and is activated by prolonged hypoxia.

The protein localises to the mitochondrion inner membrane. Protease activity is activated upon autocatalytic cleavage in response to mitochondrial depolarization. Functionally, metalloprotease that is part of the quality control system in the inner membrane of mitochondria. Activated in response to various mitochondrial stress, leading to the proteolytic cleavage of target proteins, such as opa1 and dele1. Involved in the fusion of the mitochondrial inner membranes by mediating cleavage of opa1 at S1 position, generating the soluble opa1 (S-opa1), which cooperates with the membrane form (L-opa1) to coordinate the fusion of mitochondrial inner membranes. Following stress conditions that induce loss of mitochondrial membrane potential, mediates cleavage of opa1, leading to excess production of soluble opa1 (S-opa1) and negative regulation of mitochondrial fusion. Also acts as an activator of the integrated stress response (ISR): in response to mitochondrial stress, mediates cleavage of dele1 to generate the processed form of dele1 (S-DELE1), which translocates to the cytosol and activates eif2ak1/hri to trigger the ISR. Required for the stability of the respiratory supercomplexes. This chain is Metalloendopeptidase OMA1, mitochondrial, found in Danio rerio (Zebrafish).